We begin with the raw amino-acid sequence, 231 residues long: Chalcone--flavanone isomerase (231 aa).

Substrate is bound by residues threonine 46, asparagine 112, and serine 189.

This sequence belongs to the chalcone isomerase family.

It catalyses the reaction a chalcone = a flavanone.. It participates in secondary metabolite biosynthesis; flavonoid biosynthesis. Its function is as follows. Catalyzes the intramolecular cyclization of bicyclic chalcones into tricyclic (S)-flavanones. Responsible for the isomerization of 4,2',4',6'-tetrahydroxychalcone (also termed chalcone) into naringenin. This Hordeum vulgare (Barley) protein is Chalcone--flavanone isomerase (CHI).